Here is an 823-residue protein sequence, read N- to C-terminus: Apoptosis-resistant E3 ubiquitin protein ligase 1 (823 aa).

One copy of the Filamin repeat lies at 64–158 (WDWKDPYEVG…VAYSPYYKIF (95 aa)). A disordered region spans residues 315 to 345 (PPMHMSSSQRRPSTAIEEDDEDSPSECHTPE). Residues 483–789 (SISDWSKNFE…THSTLPTAHT (307 aa)) are interaction with SOCS2. An HECT domain is found at 483-823 (SISDWSKNFE…SEGCEGFGML (341 aa)). Cys-790 functions as the Glycyl thioester intermediate in the catalytic mechanism.

In terms of assembly, interacts with SOCS2. Interacts (via HECT domain) with HTRA2, DIABLO/SMAC and SEPTIN4; in the cytoplasm following induction of apoptosis. Post-translationally, autoubiquitinated in vitro in the presence of E2 enzyme UBE2D1/UBCH5A. As to expression, detected in brain, testis, heart, liver, lung and kidney with very low levels in skeletal muscle and spleen.

The catalysed reaction is S-ubiquitinyl-[E2 ubiquitin-conjugating enzyme]-L-cysteine + [acceptor protein]-L-lysine = [E2 ubiquitin-conjugating enzyme]-L-cysteine + N(6)-ubiquitinyl-[acceptor protein]-L-lysine.. It functions in the pathway protein modification; protein ubiquitination. In terms of biological role, E3 ubiquitin-protein ligase that catalyzes 'Lys-11'- or 'Lys-33'-linked polyubiquitin chains, with some preference for 'Lys-33' linkages. E3 ubiquitin-protein ligases accept ubiquitin from an E2 ubiquitin-conjugating enzyme in the form of a thioester and then directly transfers the ubiquitin to targeted substrates. Ubiquitinates SEPTIN4, DIABLO/SMAC and HTRA2 in vitro. Modulates pulmonary inflammation by targeting SOCS2 for ubiquitination and subsequent degradation by the proteasome. In Mus musculus (Mouse), this protein is Apoptosis-resistant E3 ubiquitin protein ligase 1 (Arel1).